A 131-amino-acid polypeptide reads, in one-letter code: Methylglyoxal synthase (131 aa).

In terms of domain architecture, MGS-like spans 1–131 (MKIALIAHDK…GDLDYRKFRK (131 aa)). Residues His8, Lys12, 34–37 (TGTT), and 54–55 (SG) each bind substrate. Residue Asp60 is the Proton donor/acceptor of the active site. His87 is a substrate binding site.

It belongs to the methylglyoxal synthase family.

The catalysed reaction is dihydroxyacetone phosphate = methylglyoxal + phosphate. In terms of biological role, catalyzes the formation of methylglyoxal from dihydroxyacetone phosphate. The polypeptide is Methylglyoxal synthase (Bacillus cytotoxicus (strain DSM 22905 / CIP 110041 / 391-98 / NVH 391-98)).